A 609-amino-acid chain; its full sequence is NADH-ubiquinone oxidoreductase chain 5 (609 aa).

16 helical membrane passes run 3–23, 46–66, 90–110, 115–135, 140–160, 174–194, 216–236, 244–264, 276–296, 304–323, 328–350, 368–388, 410–432, 460–480, 485–505, and 585–605; these read VINL…LPIV, AFMI…EMII, MIFV…SMWY, PFIN…MILV, LFQL…LIGW, AVLY…WFLI, LMGL…HPWL, TPVS…FLLI, MQTT…ICAL, IIAF…IGIN, AFLH…GSII, VLPF…GMPF, WALL…IMFF, LLLG…PTST, MPYY…ILAL, and GLIK…LMMI.

This sequence belongs to the complex I subunit 5 family.

Its subcellular location is the mitochondrion inner membrane. The enzyme catalyses a ubiquinone + NADH + 5 H(+)(in) = a ubiquinol + NAD(+) + 4 H(+)(out). Core subunit of the mitochondrial membrane respiratory chain NADH dehydrogenase (Complex I) that is believed to belong to the minimal assembly required for catalysis. Complex I functions in the transfer of electrons from NADH to the respiratory chain. The immediate electron acceptor for the enzyme is believed to be ubiquinone. The protein is NADH-ubiquinone oxidoreductase chain 5 (MT-ND5) of Phoca vitulina (Harbor seal).